Reading from the N-terminus, the 614-residue chain is WD repeat-containing protein 26 (614 aa).

Low complexity-rich tracts occupy residues 1 to 19 and 34 to 44; these read MQAN…AGSG and SNGVLSSNNGL. Positions 1–65 are disordered; that stretch reads MQANGAAAAA…PGGRKKKRLS (65 aa). A LisH domain is found at 67–99; the sequence is ADEDVIRLIGQHLHGLGLNQTVDLLMQESGCRL. The region spanning 100–184 is the CTLH domain; sequence EHPSATKFRN…EYLEDGKVLE (85 aa). WD repeat units lie at residues 306–345, 352–391, 397–437, 477–516, 519–561, and 564–604; these read EHCN…HQLK, GHAY…GELR, SHED…DSWE, QEDH…LVRK, GVTQ…PIAE, and GHTR…DNQE.

Forms homooligomers. Identified in the CTLH complex that contains at least MAEA, RMND5A (or alternatively its paralog RMND5B), GID8, WDR26, and RANBP9 and/or RANBP10. Interacts with DDB1-CUL4A/B E3 ligase complexes.

It localises to the cytoplasm. The protein localises to the nucleus. It is found in the mitochondrion. In terms of biological role, G-beta-like protein involved in cell signal transduction. Acts as a negative regulator in MAPK signaling pathway. Functions as a scaffolding protein to promote G beta:gamma-mediated PLCB2 plasma membrane translocation and subsequent activation in leukocytes. Core component of the CTLH E3 ubiquitin-protein ligase complex that mediates ubiquitination and subsequent proteasomal degradation of target proteins. Acts as a negative regulator of the canonical Wnt signaling pathway through preventing ubiquitination of beta-catenin CTNNB1 by the beta-catenin destruction complex, thus negatively regulating CTNNB1 degradation. Serves as a scaffold to coordinate PI3K/AKT pathway-driven cell growth and migration. Protects cells from oxidative stress-induced apoptosis via the down-regulation of AP-1 transcriptional activity as well as by inhibiting cytochrome c release from mitochondria. Also protects cells by promoting hypoxia-mediated autophagy and mitophagy. This is WD repeat-containing protein 26 (wdr26) from Xenopus tropicalis (Western clawed frog).